Consider the following 322-residue polypeptide: Deoxycytidylate deaminase (322 aa).

A CMP/dCMP-type deaminase domain is found at 173 to 311 (SWDSYFMEMA…SLLQAAGVQL (139 aa)). Residue His-246 participates in Zn(2+) binding. Glu-248 (proton donor) is an active-site residue. Zn(2+) contacts are provided by Cys-273 and Cys-276.

This sequence belongs to the cytidine and deoxycytidylate deaminase family. Requires Zn(2+) as cofactor.

It is found in the cytoplasm. The protein resides in the nucleus. It catalyses the reaction dCMP + H2O + H(+) = dUMP + NH4(+). Its function is as follows. Supplies the nucleotide substrate for thymidylate synthetase. The sequence is that of Deoxycytidylate deaminase from Schizosaccharomyces pombe (strain 972 / ATCC 24843) (Fission yeast).